Consider the following 150-residue polypeptide: 6,7-dimethyl-8-ribityllumazine synthase (150 aa).

5-amino-6-(D-ribitylamino)uracil contacts are provided by residues phenylalanine 11, 43-45 (VFD), and 67-69 (AVI). Residue 72–73 (AT) participates in (2S)-2-hydroxy-3-oxobutyl phosphate binding. Histidine 75 (proton donor) is an active-site residue. Leucine 100 provides a ligand contact to 5-amino-6-(D-ribitylamino)uracil. Arginine 115 serves as a coordination point for (2S)-2-hydroxy-3-oxobutyl phosphate.

This sequence belongs to the DMRL synthase family.

The catalysed reaction is (2S)-2-hydroxy-3-oxobutyl phosphate + 5-amino-6-(D-ribitylamino)uracil = 6,7-dimethyl-8-(1-D-ribityl)lumazine + phosphate + 2 H2O + H(+). It participates in cofactor biosynthesis; riboflavin biosynthesis; riboflavin from 2-hydroxy-3-oxobutyl phosphate and 5-amino-6-(D-ribitylamino)uracil: step 1/2. In terms of biological role, catalyzes the formation of 6,7-dimethyl-8-ribityllumazine by condensation of 5-amino-6-(D-ribitylamino)uracil with 3,4-dihydroxy-2-butanone 4-phosphate. This is the penultimate step in the biosynthesis of riboflavin. The sequence is that of 6,7-dimethyl-8-ribityllumazine synthase from Pyrobaculum calidifontis (strain DSM 21063 / JCM 11548 / VA1).